The primary structure comprises 439 residues: Xylose isomerase (439 aa).

Catalysis depends on residues His-101 and Asp-104. Mg(2+) contacts are provided by Glu-232, Glu-268, His-271, Asp-296, Asp-307, Asp-309, and Asp-339.

The protein belongs to the xylose isomerase family. As to quaternary structure, homotetramer. The cofactor is Mg(2+).

Its subcellular location is the cytoplasm. The catalysed reaction is alpha-D-xylose = alpha-D-xylulofuranose. The chain is Xylose isomerase from Haemophilus influenzae (strain PittGG).